The following is a 304-amino-acid chain: Protein UL24 homolog (304 aa).

This sequence belongs to the HHV-1 UL24 protein family.

It localises to the host cytoplasm. It is found in the host nucleus. The protein localises to the host Golgi apparatus. In terms of biological role, may play a role in the dispersal of host nucleolin from the nucleolus throughout the nucleus leading to a decrease in ribosome biogenesis. In Gallid herpesvirus 2 (strain Chicken/Md5/ATCC VR-987) (GaHV-2), this protein is Protein UL24 homolog (MDV035).